Reading from the N-terminus, the 413-residue chain is uncharacterized protein (413 aa).

An N-acetyltransferase domain is found at 3–155 (MEPRVLRREE…SRVRLSVPAG (153 aa)). Residues 86–88 (VSV), 94–99 (RRGVLT), and 122–123 (SE) each bind acetyl-CoA. Tyrosine 127 functions as the Proton donor in the catalytic mechanism. Phenylalanine 413 acts as the Proton acceptor; via carboxylate in catalysis.

This sequence belongs to the acetyltransferase Eis family. Homohexamer; trimer of dimers.

This is an uncharacterized protein from Streptomyces coelicolor (strain ATCC BAA-471 / A3(2) / M145).